The sequence spans 197 residues: dTTP/UTP pyrophosphatase (197 aa).

The active-site Proton acceptor is Asp-69.

The protein belongs to the Maf family. YhdE subfamily. It depends on a divalent metal cation as a cofactor.

The protein resides in the cytoplasm. It carries out the reaction dTTP + H2O = dTMP + diphosphate + H(+). The enzyme catalyses UTP + H2O = UMP + diphosphate + H(+). In terms of biological role, nucleoside triphosphate pyrophosphatase that hydrolyzes dTTP and UTP. May have a dual role in cell division arrest and in preventing the incorporation of modified nucleotides into cellular nucleic acids. The protein is dTTP/UTP pyrophosphatase of Lachnoclostridium phytofermentans (strain ATCC 700394 / DSM 18823 / ISDg) (Clostridium phytofermentans).